A 762-amino-acid chain; its full sequence is Polyribonucleotide nucleotidyltransferase (762 aa).

Positions 531 and 537 each coordinate Mg(2+). Residues 597–656 form the KH domain; sequence PRVTTIKVPVDKIGEVIGPKGKVINSITEETRAQISIEDDGTVFVGATDGPSAQAAIDKI. One can recognise an S1 motif domain in the interval 668 to 737; the sequence is GERFLGTVVK…KRGKISLVLV (70 aa).

This sequence belongs to the polyribonucleotide nucleotidyltransferase family. Mg(2+) is required as a cofactor.

The protein resides in the cytoplasm. It catalyses the reaction RNA(n+1) + phosphate = RNA(n) + a ribonucleoside 5'-diphosphate. Its function is as follows. Involved in mRNA degradation. Catalyzes the phosphorolysis of single-stranded polyribonucleotides processively in the 3'- to 5'-direction. In Mycobacterium ulcerans (strain Agy99), this protein is Polyribonucleotide nucleotidyltransferase.